A 39-amino-acid chain; its full sequence is uncharacterized protein (39 aa).

This is an uncharacterized protein from Bacillus subtilis (strain 168).